A 264-amino-acid polypeptide reads, in one-letter code: 3-methyl-2-oxobutanoate hydroxymethyltransferase (264 aa).

Mg(2+) is bound by residues D45 and D84. 3-methyl-2-oxobutanoate-binding positions include 45-46 (DS), D84, and K112. E114 serves as a coordination point for Mg(2+). Residue E181 is the Proton acceptor of the active site.

The protein belongs to the PanB family. In terms of assembly, homodecamer; pentamer of dimers. It depends on Mg(2+) as a cofactor.

Its subcellular location is the cytoplasm. The enzyme catalyses 3-methyl-2-oxobutanoate + (6R)-5,10-methylene-5,6,7,8-tetrahydrofolate + H2O = 2-dehydropantoate + (6S)-5,6,7,8-tetrahydrofolate. It functions in the pathway cofactor biosynthesis; (R)-pantothenate biosynthesis; (R)-pantoate from 3-methyl-2-oxobutanoate: step 1/2. Functionally, catalyzes the reversible reaction in which hydroxymethyl group from 5,10-methylenetetrahydrofolate is transferred onto alpha-ketoisovalerate to form ketopantoate. The protein is 3-methyl-2-oxobutanoate hydroxymethyltransferase of Aliivibrio fischeri (strain MJ11) (Vibrio fischeri).